The following is a 159-amino-acid chain: S-ribosylhomocysteine lyase (159 aa).

Fe cation-binding residues include H53, H57, and C124.

This sequence belongs to the LuxS family. In terms of assembly, homodimer. It depends on Fe cation as a cofactor.

The catalysed reaction is S-(5-deoxy-D-ribos-5-yl)-L-homocysteine = (S)-4,5-dihydroxypentane-2,3-dione + L-homocysteine. In terms of biological role, involved in the synthesis of autoinducer 2 (AI-2) which is secreted by bacteria and is used to communicate both the cell density and the metabolic potential of the environment. The regulation of gene expression in response to changes in cell density is called quorum sensing. Catalyzes the transformation of S-ribosylhomocysteine (RHC) to homocysteine (HC) and 4,5-dihydroxy-2,3-pentadione (DPD). This chain is S-ribosylhomocysteine lyase, found in Desulfotalea psychrophila (strain LSv54 / DSM 12343).